We begin with the raw amino-acid sequence, 308 residues long: Snake venom metalloprotease inhibitor 02D01 (308 aa).

The signal sequence occupies residues M1–G23. Positions K24 to E38 are excised as a propeptide. The residue at position 39 (Q39) is a Pyrrolidone carboxylic acid. Positions L42 to E50 are excised as a propeptide. At Q51 the chain carries Pyrrolidone carboxylic acid. Residues L54 to E62 constitute a propeptide that is removed on maturation. Position 63 is a pyrrolidone carboxylic acid (Q63). The propeptide occupies L66–E74. Pyrrolidone carboxylic acid is present on Q75. A propeptide spanning residues L78–E86 is cleaved from the precursor. At Q87 the chain carries Pyrrolidone carboxylic acid. A propeptide spanning residues L90–E98 is cleaved from the precursor. A Pyrrolidone carboxylic acid modification is found at Q99. Residues L102–E110 constitute a propeptide that is removed on maturation. Pyrrolidone carboxylic acid is present on Q111. A propeptide spanning residues L114 to E122 is cleaved from the precursor. Position 123 is a pyrrolidone carboxylic acid (Q123). The propeptide occupies L126–E134. Residue Q135 is modified to Pyrrolidone carboxylic acid. The propeptide occupies L138–E146. Q147 bears the Pyrrolidone carboxylic acid mark. A propeptide spanning residues L150–E158 is cleaved from the precursor. At Q159 the chain carries Pyrrolidone carboxylic acid. A propeptide spanning residues Q162–L249 is cleaved from the precursor. Residues R172–L182 show a composition bias toward polar residues. Disordered stretches follow at residues R172–T228 and H252–R279. A compositionally biased stretch (gly residues) spans V198–S209. Residues K210–A227 are compositionally biased toward low complexity. The span at S265–A277 shows a compositional bias: gly residues. The propeptide occupies R278–K286. C292 and C308 are disulfide-bonded.

In the C-terminal section; belongs to the natriuretic peptide family. It in the central section; belongs to the pHpG family. As to expression, expressed by the venom gland.

Its subcellular location is the secreted. Functionally, pEKW and poly-His-poly-Gly peptides may serve as metalloproteinase inhibitors during glandular storage. Their inhibition may be instantly disengaged, by dilution or physiochemical change, when venom is injected into tissue of the prey. Has a vasorelaxant activity in rat aortic strips and a diuretic potency in anesthetized rats. May act by activating natriuretic receptors (NPR1 and/or NPR2). The chain is Snake venom metalloprotease inhibitor 02D01 from Echis ocellatus (Ocellated saw-scaled viper).